We begin with the raw amino-acid sequence, 1227 residues long: Pesticidal crystal protein Cry1Be (1227 aa).

The protein belongs to the delta endotoxin family.

Promotes colloidosmotic lysis by binding to the midgut epithelial cells of many lepidopteran larvae. This is Pesticidal crystal protein Cry1Be (cry1Be) from Bacillus thuringiensis.